The primary structure comprises 189 residues: Elongation factor P (189 aa).

Belongs to the elongation factor P family.

The protein resides in the cytoplasm. It functions in the pathway protein biosynthesis; polypeptide chain elongation. In terms of biological role, involved in peptide bond synthesis. Stimulates efficient translation and peptide-bond synthesis on native or reconstituted 70S ribosomes in vitro. Probably functions indirectly by altering the affinity of the ribosome for aminoacyl-tRNA, thus increasing their reactivity as acceptors for peptidyl transferase. The protein is Elongation factor P of Rhizobium etli (strain CIAT 652).